The sequence spans 743 residues: MTPRRVAKLVQFSGSYLNTEWARKFILGSLLQRYNPQSLTTVGSSAAGNSGEDASLDKELLHLQRSLSEVWSLPAQPLDAVSEGRILRLLARYATGEGVMSIEALNELSHVLSCIRGSPQRVEGPIDMEELLLAIGYAKPGDNLRRVAFAGELQYPPSALAHMRAHLRDDMERDGSDPFDILRVVTHNPAYAIDSASTSEVDDAIGVHKDPVTGEECFVVYVSDATVYCPFDSPLEQLTARLLTTTTYLPEGVFFMLPKPIVDAATLREDRPCRTFDIRFQIDEVTGELKNYSVGVGWLHKLRRITYDEVQALYDEEAQVGNQHHHTERESTQASPAKREEGKKGMVASGGTSSCRPSWMTVEDESILRRIYRAAQKRYETRQLRAGDRFIHADLPEPLIKVGAGAQVLSVEDQIIGTRDARLAVAEMMIAANEVCSRVAQENHLSIPFRGTRELSLDHVAAKSYREPHGVVSVQSLDPQYVFFAEAMQRSIRQLSGVTRAVYFHTPIYHAGLDTHNYTHSTSPLRRYADMLVHHQLKVWLWRTSHCSSGGGVLHSAQKSSPVLIEQPIAEHTMATLCSMISSKQEQSSILQESSQRYWLLKHIKQNILTKSPHHRFICLVGDTRSVKCAPEYARFVVECSHDSPSQPDGGVHRTVPWAGRWKQRHHEYLYVSDIYITELQFAHVVLHSLPDVVVGAVVECEVREVHPTQGYLSLAIVKVWSGGDERRFEPLWKKCLLPSLDS.

A mitochondrion-targeting transit peptide spans 1 to 67 (MTPRRVAKLV…KELLHLQRSL (67 aa)). The RNB domain maps to 186-542 (THNPAYAIDS…VHHQLKVWLW (357 aa)). Positions 320 to 357 (VGNQHHHTERESTQASPAKREEGKKGMVASGGTSSCRP) are disordered. Over residues 325-344 (HHTERESTQASPAKREEGKK) the composition is skewed to basic and acidic residues.

It belongs to the RNR ribonuclease family. In terms of assembly, component of the mitochondrial 3' processome (MPsome) complex composed at least of terminal uridylyltransferase KRET1/TUT1, 3'-5' exonuclease DSS1, MPSS1, MPSS2 and MPSS3. Within the complex, interacts with KRET1 and MPSS2. Component of the mitochondrial degradosome complex composed at least of 3'-5' exonuclease DSS1 and helicase SUV3. Within the complex, interacts with helicase SUV3.

Its subcellular location is the mitochondrion. The enzyme catalyses Exonucleolytic cleavage in the 3'- to 5'-direction to yield nucleoside 5'-phosphates.. In terms of biological role, 3'-5'exoribonuclease which is involved in the post-transcriptional processing, editing and degradation of mitochondrial RNAs, including mRNAs, rRNAs and guided RNAs (gRNA). As part of the mitochondrial 3' processome (MPsome), involved in the maturation of guided RNA (gRNA) precursors by catalyzing the processive 3'-5' degradation of uridylated gRNA precursors. Plays a role in the degradation of 12S rRNA processing intermediates and maturation by-products. In Trypanosoma brucei brucei, this protein is Mitochondrial exoribonuclease DSS-1.